The primary structure comprises 424 residues: tRNA(Ile)-lysidine synthase (424 aa).

26-31 (SGGIDS) lines the ATP pocket.

Belongs to the tRNA(Ile)-lysidine synthase family.

It localises to the cytoplasm. It carries out the reaction cytidine(34) in tRNA(Ile2) + L-lysine + ATP = lysidine(34) in tRNA(Ile2) + AMP + diphosphate + H(+). Its function is as follows. Ligates lysine onto the cytidine present at position 34 of the AUA codon-specific tRNA(Ile) that contains the anticodon CAU, in an ATP-dependent manner. Cytidine is converted to lysidine, thus changing the amino acid specificity of the tRNA from methionine to isoleucine. The polypeptide is tRNA(Ile)-lysidine synthase (Streptococcus agalactiae serotype V (strain ATCC BAA-611 / 2603 V/R)).